A 510-amino-acid chain; its full sequence is Leucine-rich repeat-containing protein 53 (510 aa).

LRR repeat units follow at residues 34 to 55 (TTRV…NLSL), 58 to 79 (NLAL…ALDG), 82 to 102 (MLRT…TDHT), 108 to 129 (SLQV…WFRN), 132 to 153 (GLTR…SFGG), 158 to 179 (SLRH…AFRP), and 182 to 203 (QLQE…FTPL). One can recognise an LRRCT domain in the interval 214–271 (NQWSCTCDLHPLARFLRNYIKSSAHTLRNAKDLNCQPSTAAVAAAQSVLRLSETNCDP). Residues 294–314 (LLTVLGFAGAVGLTCLGLVVF) form a helical membrane-spanning segment.

The protein localises to the membrane. This Macaca fascicularis (Crab-eating macaque) protein is Leucine-rich repeat-containing protein 53 (LRRC53).